The primary structure comprises 114 residues: DNA-directed RNA polymerase subunit Rpo4 (114 aa).

Belongs to the eukaryotic RPB4 RNA polymerase subunit family. Part of the 13-subunit RNA polymerase complex. Forms a stalk with Rpo7 that extends from the main structure. In terms of processing, in purified enzyme appears as 5 forms, each differing by about 200 Da of a covalently bound, negatively charged residue. Not glycosylated.

It is found in the cytoplasm. It catalyses the reaction RNA(n) + a ribonucleoside 5'-triphosphate = RNA(n+1) + diphosphate. Its function is as follows. DNA-dependent RNA polymerase catalyzes the transcription of DNA into RNA using the four ribonucleoside triphosphates as substrates. This subunit is less well bound than the others. Probably not involved in transcription initiation. The chain is DNA-directed RNA polymerase subunit Rpo4 from Sulfolobus acidocaldarius (strain ATCC 33909 / DSM 639 / JCM 8929 / NBRC 15157 / NCIMB 11770).